Reading from the N-terminus, the 360-residue chain is Phospho-N-acetylmuramoyl-pentapeptide-transferase (360 aa).

Helical transmembrane passes span 27 to 47 (IVSL…LIAW), 72 to 92 (PTMG…MWAY), 94 to 114 (SNPY…VGFI), 132 to 152 (WKYF…FAVG), 168 to 188 (IMPQ…VGTS), 199 to 219 (GLAI…AWAT), 235 to 255 (FAGE…GFLW), 263 to 283 (VFMG…IAVL), 288 to 308 (FLLL…ILQV), and 338 to 358 (VIVR…ATLK).

It belongs to the glycosyltransferase 4 family. MraY subfamily. Mg(2+) is required as a cofactor.

It localises to the cell inner membrane. It catalyses the reaction UDP-N-acetyl-alpha-D-muramoyl-L-alanyl-gamma-D-glutamyl-meso-2,6-diaminopimeloyl-D-alanyl-D-alanine + di-trans,octa-cis-undecaprenyl phosphate = di-trans,octa-cis-undecaprenyl diphospho-N-acetyl-alpha-D-muramoyl-L-alanyl-D-glutamyl-meso-2,6-diaminopimeloyl-D-alanyl-D-alanine + UMP. It functions in the pathway cell wall biogenesis; peptidoglycan biosynthesis. Catalyzes the initial step of the lipid cycle reactions in the biosynthesis of the cell wall peptidoglycan: transfers peptidoglycan precursor phospho-MurNAc-pentapeptide from UDP-MurNAc-pentapeptide onto the lipid carrier undecaprenyl phosphate, yielding undecaprenyl-pyrophosphoryl-MurNAc-pentapeptide, known as lipid I. The polypeptide is Phospho-N-acetylmuramoyl-pentapeptide-transferase (Sodalis glossinidius (strain morsitans)).